Here is a 1097-residue protein sequence, read N- to C-terminus: DNA-directed RNA polymerase subunit beta (1097 aa).

Positions 1073 to 1097 (DINPRRNTPSRPTYESLGTSEYEED) are disordered. The segment covering 1077–1091 (RRNTPSRPTYESLGT) has biased composition (polar residues).

It belongs to the RNA polymerase beta chain family. In cyanobacteria the RNAP catalytic core is composed of 2 alpha, 1 beta, 1 beta', 1 gamma and 1 omega subunit. When a sigma factor is associated with the core the holoenzyme is formed, which can initiate transcription.

The catalysed reaction is RNA(n) + a ribonucleoside 5'-triphosphate = RNA(n+1) + diphosphate. Functionally, DNA-dependent RNA polymerase catalyzes the transcription of DNA into RNA using the four ribonucleoside triphosphates as substrates. This Prochlorococcus marinus (strain MIT 9312) protein is DNA-directed RNA polymerase subunit beta.